The chain runs to 109 residues: ATPase inhibitor mai-2, mitochondrial (109 aa).

Disordered stretches follow at residues 18-39 (FSAG…SIRD) and 73-109 (EEVK…LGKE). Over residues 21 to 35 (GGHGDGAGRGGGSGG) the composition is skewed to gly residues. Positions 55–109 (YFYKKQKAQLQELREHIQEEVKHHEGQLENHKKVLERHQQRISEIEAQERALGKE) form a coiled coil.

It belongs to the ATPase inhibitor family.

Its subcellular location is the mitochondrion. In terms of biological role, thought to be a regulatory component of the ATP-synthesizing complex in the mitochondria. Activity is pH dependent. The sequence is that of ATPase inhibitor mai-2, mitochondrial (mai-2) from Caenorhabditis elegans.